Here is a 213-residue protein sequence, read N- to C-terminus: Histone H1.3 (213 aa).

S1 carries the post-translational modification N-acetylserine. Positions 1–15 (SEAPAETAAPAPAEK) are enriched in low complexity. The tract at residues 1-41 (SEAPAETAAPAPAEKSPAKKKKAAKKPGAGAAKRKAAGPPV) is disordered. Residue K15 is modified to N6-acetyllysine. N6-(beta-hydroxybutyryl)lysine is present on residues K35 and K53. One can recognise an H15 domain in the interval 37 to 110 (AGPPVSELIT…GASGSFKLDK (74 aa)). Citrulline is present on R55. Residues K65, K86, and K91 each carry the N6-(beta-hydroxybutyryl)lysine modification. The tract at residues 92–213 (GTLVETKGTG…AKKTAAKKKK (122 aa)) is disordered. S105 bears the Phosphoserine mark. At K107 the chain carries N6-(beta-hydroxybutyryl)lysine. The span at 107–119 (KLDKKAASGEAKP) shows a compositional bias: basic and acidic residues. Basic residues-rich tracts occupy residues 120–131 (KPKKAGAAKPKK), 138–170 (KKPK…KVAK), and 179–213 (KSPK…KKKK).

Belongs to the histone H1/H5 family. Post-translationally, H1 histones are progressively phosphorylated during the cell cycle, becoming maximally phosphorylated during late G2 phase and M phase, and being dephosphorylated sharply thereafter. Citrullination at Arg-55 (H1R54ci) by PADI4 takes place within the DNA-binding site of H1 and results in its displacement from chromatin and global chromatin decondensation, thereby promoting pluripotency and stem cell maintenance.

It is found in the nucleus. It localises to the chromosome. In terms of biological role, histones H1 are necessary for the condensation of nucleosome chains into higher-order structures. This Oryctolagus cuniculus (Rabbit) protein is Histone H1.3.